A 616-amino-acid polypeptide reads, in one-letter code: Chaperone protein HscA (616 aa).

This sequence belongs to the heat shock protein 70 family.

Its function is as follows. Chaperone involved in the maturation of iron-sulfur cluster-containing proteins. Has a low intrinsic ATPase activity which is markedly stimulated by HscB. Involved in the maturation of IscU. This chain is Chaperone protein HscA, found in Pectobacterium carotovorum subsp. carotovorum (strain PC1).